The chain runs to 207 residues: LexA repressor (207 aa).

Residues 33–52 constitute a DNA-binding region (H-T-H motif); the sequence is VKEMSETFGISHASVHDRIN. Active-site for autocatalytic cleavage activity residues include S129 and K166.

This sequence belongs to the peptidase S24 family. As to quaternary structure, homodimer.

The enzyme catalyses Hydrolysis of Ala-|-Gly bond in repressor LexA.. Functionally, represses a number of genes involved in the response to DNA damage (SOS response), including recA and lexA. In the presence of single-stranded DNA, RecA interacts with LexA causing an autocatalytic cleavage which disrupts the DNA-binding part of LexA, leading to derepression of the SOS regulon and eventually DNA repair. This chain is LexA repressor, found in Oleidesulfovibrio alaskensis (strain ATCC BAA-1058 / DSM 17464 / G20) (Desulfovibrio alaskensis).